The primary structure comprises 123 residues: Large ribosomal subunit protein bL12 (123 aa).

It belongs to the bacterial ribosomal protein bL12 family. Homodimer. Part of the ribosomal stalk of the 50S ribosomal subunit. Forms a multimeric L10(L12)X complex, where L10 forms an elongated spine to which 2 to 4 L12 dimers bind in a sequential fashion. Binds GTP-bound translation factors.

In terms of biological role, forms part of the ribosomal stalk which helps the ribosome interact with GTP-bound translation factors. Is thus essential for accurate translation. This Rhodopseudomonas palustris (strain HaA2) protein is Large ribosomal subunit protein bL12.